The following is a 1050-amino-acid chain: ATP-dependent DNA helicase MPH1 (1050 aa).

Residues 95-262 (IVQRAFYHNL…EIIDNLNISK (168 aa)) form the Helicase ATP-binding domain. 108–115 (LPTGLGKT) contacts ATP. The DEAH box signature appears at 210–213 (DEAH). The Helicase C-terminal domain occupies 431-631 (KIEAMMEELD…LIDLKEQNRM (201 aa)). Disordered stretches follow at residues 493 to 524 (DESNFGKKSKGKRVGKKQQDDSKSSSENAQIN) and 743 to 821 (DSDE…PPKR). Over residues 499–508 (KKSKGKRVGK) the composition is skewed to basic residues. The segment covering 786-799 (RTLDQHHSASEERG) has biased composition (basic and acidic residues). The span at 800–810 (INSNFSHESNL) shows a compositional bias: polar residues.

Belongs to the DEAD box helicase family. DEAH subfamily. FANCM sub-subfamily. In terms of assembly, interacts with the MHF histone-fold complex to form the FANCM-MHF complex.

The protein localises to the nucleus. It catalyses the reaction ATP + H2O = ADP + phosphate + H(+). Its function is as follows. ATP-dependent DNA helicase involved in DNA damage repair by homologous recombination and in genome maintenance. Capable of unwinding D-loops. Plays a role in limiting crossover recombinants during mitotic DNA double-strand break (DSB) repair. Component of a FANCM-MHF complex which promotes gene conversion at blocked replication forks, probably by reversal of the stalled fork. This Scheffersomyces stipitis (strain ATCC 58785 / CBS 6054 / NBRC 10063 / NRRL Y-11545) (Yeast) protein is ATP-dependent DNA helicase MPH1.